Consider the following 693-residue polypeptide: MAAGSHGGYRGYEVAREREHDVGVSRRSKEHYHHRHPSRHRDSERRRDGGRSGGRELSNGYSHRRDSPRPPPRRRPSEGRTEDREPGEVSGGSGSERSGERPMKTREPRENGVTRVSKEEAKMSPSKKRKQSPVIWDRNGSQRQARDPVRGIREVDAVVAEIIMHQSHSLPVMSSLSSIGDGHSPMILDVSVDKVQEYEKNRIVDEEEEGYPTMRNILTSRWADAGDEEENVFVPKKKKSVSPVDSIERGSTKKVTSPESGEVLVYNSVRSSSRSSDSGVLQGSANRDLEVEKGDNIDVEKAADDDYPAGHLLDSDFEGEDCRSETPECTRSPRRCINMLQGCRSVDEFERLNTINEGTYGVVFRVRDKRTGEIVALKKVKMEKEREGFPLTSLREMNILLSFHHPSIVEVKEVVVGSNDRDIFMVMEYMEHDLKGVMETMKQPYSQSEVKCLMLQLLEGVKYLHDNWVLHRDLKTSNLLLNNRGELKICDFGLSRQYGSPLKPYTQLVVTLWYRAPELLLGAKDYSTAIDMWSLGCIMGELLSKGPLFNGKSEIDQLDKIFRTLGTPDENIWPGYSKLPGATVKFGKQTHNRLRDKFRAVSFTGGPMLSEAGFDLLNRLLTYDPEKRISAEDALNHEWFRELPLPRSKDFMPTFPALNEQDRRFKKHMKSPDPLEEQWMKEQGNNGDRGLFG.

The span at 1–10 shows a compositional bias: gly residues; it reads MAAGSHGGYR. 2 disordered regions span residues 1 to 148 and 236 to 308; these read MAAG…ARDP and KKKK…DDYP. The segment covering 13–24 has biased composition (basic and acidic residues); sequence EVAREREHDVGV. Residues 26–39 show a composition bias toward basic residues; sequence RRSKEHYHHRHPSR. Basic and acidic residues-rich tracts occupy residues 40–54, 75–87, and 97–122; these read HRDS…RSGG, RPSE…REPG, and RSGE…EEAK. Over residues 268 to 284 the composition is skewed to low complexity; sequence SVRSSSRSSDSGVLQGS. Residues 287–304 are compositionally biased toward basic and acidic residues; it reads RDLEVEKGDNIDVEKAAD. Positions 349–640 constitute a Protein kinase domain; it reads FERLNTINEG…AEDALNHEWF (292 aa). Residues 355 to 363 and lysine 378 contribute to the ATP site; that span reads INEGTYGVV. Phosphothreonine is present on threonine 359. Phosphotyrosine is present on tyrosine 360. Aspartate 473 serves as the catalytic Proton acceptor. Serine 500 bears the Phosphoserine mark. Threonine 506 carries the phosphothreonine modification. The tract at residues 664-693 is disordered; the sequence is RFKKHMKSPDPLEEQWMKEQGNNGDRGLFG.

It belongs to the protein kinase superfamily. CMGC Ser/Thr protein kinase family. CDC2/CDKX subfamily.

The catalysed reaction is L-seryl-[protein] + ATP = O-phospho-L-seryl-[protein] + ADP + H(+). It catalyses the reaction L-threonyl-[protein] + ATP = O-phospho-L-threonyl-[protein] + ADP + H(+). The enzyme catalyses [DNA-directed RNA polymerase] + ATP = phospho-[DNA-directed RNA polymerase] + ADP + H(+). This chain is Cyclin-dependent kinase G-1 (CDKG-1), found in Oryza sativa subsp. indica (Rice).